A 225-amino-acid polypeptide reads, in one-letter code: NAD(P)H-quinone oxidoreductase subunit K, chloroplastic (225 aa).

[4Fe-4S] cluster-binding residues include cysteine 43, cysteine 44, cysteine 108, and cysteine 139.

This sequence belongs to the complex I 20 kDa subunit family. NDH is composed of at least 16 different subunits, 5 of which are encoded in the nucleus. It depends on [4Fe-4S] cluster as a cofactor.

It localises to the plastid. Its subcellular location is the chloroplast thylakoid membrane. The enzyme catalyses a plastoquinone + NADH + (n+1) H(+)(in) = a plastoquinol + NAD(+) + n H(+)(out). It catalyses the reaction a plastoquinone + NADPH + (n+1) H(+)(in) = a plastoquinol + NADP(+) + n H(+)(out). In terms of biological role, NDH shuttles electrons from NAD(P)H:plastoquinone, via FMN and iron-sulfur (Fe-S) centers, to quinones in the photosynthetic chain and possibly in a chloroplast respiratory chain. The immediate electron acceptor for the enzyme in this species is believed to be plastoquinone. Couples the redox reaction to proton translocation, and thus conserves the redox energy in a proton gradient. The chain is NAD(P)H-quinone oxidoreductase subunit K, chloroplastic from Olimarabidopsis pumila (Dwarf rocket).